A 526-amino-acid chain; its full sequence is Peptide chain release factor 3 (526 aa).

The region spanning 9-277 (DKRRTFAIIS…GIVEWAPKPL (269 aa)) is the tr-type G domain. Residues 18–25 (SHPDAGKT), 86–90 (DTPGH), and 140–143 (NKLD) contribute to the GTP site.

Belongs to the TRAFAC class translation factor GTPase superfamily. Classic translation factor GTPase family. PrfC subfamily.

Its subcellular location is the cytoplasm. In terms of biological role, increases the formation of ribosomal termination complexes and stimulates activities of RF-1 and RF-2. It binds guanine nucleotides and has strong preference for UGA stop codons. It may interact directly with the ribosome. The stimulation of RF-1 and RF-2 is significantly reduced by GTP and GDP, but not by GMP. The sequence is that of Peptide chain release factor 3 from Shewanella baltica (strain OS223).